The sequence spans 658 residues: Vertnin (658 aa).

Belongs to the vertnin family.

Its subcellular location is the nucleus. Its function is as follows. Acts as a transcription factor that regulates development of thoracic vertebrae. The sequence is that of Vertnin (VRTN) from Bos taurus (Bovine).